Reading from the N-terminus, the 229-residue chain is Large ribosomal subunit protein uL1 (229 aa).

It belongs to the universal ribosomal protein uL1 family. Part of the 50S ribosomal subunit.

Its function is as follows. Binds directly to 23S rRNA. The L1 stalk is quite mobile in the ribosome, and is involved in E site tRNA release. In terms of biological role, protein L1 is also a translational repressor protein, it controls the translation of the L11 operon by binding to its mRNA. The protein is Large ribosomal subunit protein uL1 of Rhodopseudomonas palustris (strain TIE-1).